Consider the following 303-residue polypeptide: Recombination-associated protein RdgC (303 aa).

This sequence belongs to the RdgC family.

Its subcellular location is the cytoplasm. The protein resides in the nucleoid. Functionally, may be involved in recombination. This chain is Recombination-associated protein RdgC, found in Shewanella halifaxensis (strain HAW-EB4).